The chain runs to 694 residues: DNA-binding protein RFX2 (694 aa).

The segment at residues 174 to 249 is a DNA-binding region (RFX-type winged-helix); it reads HLQWLLDNYE…YHYYGIRLKP (76 aa). Disordered stretches follow at residues 268–309 and 659–694; these read QPIH…SQHH and DDVSELGSDNDGDPRISGQPPVKRERVDLNHSMQEM. The segment covering 288-299 has biased composition (polar residues); that stretch reads NTANSSQHTSPE. Low complexity predominate over residues 300-309; that stretch reads QSVAAQSQHH.

Belongs to the RFX family. As to quaternary structure, homodimer. Heterodimer; heterodimerizes with other rfx proteins.

The protein localises to the nucleus. It localises to the cytoplasm. In terms of biological role, transcription factor that acts as a key regulator of ciliogenesis. Specifically regulates expression of genes required for cilium assembly and function. Recognizes and binds the X-box, a regulatory motif with DNA sequence 5'-GTNRCC(0-3N)RGYAAC-3' present on promoters. Required for neural tube closure and neural ciliogenesis. This chain is DNA-binding protein RFX2 (rfx2), found in Xenopus tropicalis (Western clawed frog).